A 92-amino-acid polypeptide reads, in one-letter code: Small ribosomal subunit protein uS19 (92 aa).

Residues 72–92 form a disordered region; sequence GEFSPTRSFRGHAGAKNKGKK. Residues 80–92 are compositionally biased toward basic residues; it reads FRGHAGAKNKGKK.

It belongs to the universal ribosomal protein uS19 family.

Protein S19 forms a complex with S13 that binds strongly to the 16S ribosomal RNA. This chain is Small ribosomal subunit protein uS19, found in Flavobacterium johnsoniae (strain ATCC 17061 / DSM 2064 / JCM 8514 / BCRC 14874 / CCUG 350202 / NBRC 14942 / NCIMB 11054 / UW101) (Cytophaga johnsonae).